A 511-amino-acid chain; its full sequence is 2,3-bisphosphoglycerate-independent phosphoglycerate mutase (511 aa).

2 residues coordinate Mn(2+): aspartate 12 and serine 62. The Phosphoserine intermediate role is filled by serine 62. Residues histidine 123, 152 to 153, arginine 184, arginine 190, 259 to 262, and lysine 333 contribute to the substrate site; these read RD and RADR. Aspartate 401, histidine 405, aspartate 442, histidine 443, and histidine 460 together coordinate Mn(2+).

The protein belongs to the BPG-independent phosphoglycerate mutase family. In terms of assembly, monomer. The cofactor is Mn(2+).

It carries out the reaction (2R)-2-phosphoglycerate = (2R)-3-phosphoglycerate. The protein operates within carbohydrate degradation; glycolysis; pyruvate from D-glyceraldehyde 3-phosphate: step 3/5. Its function is as follows. Catalyzes the interconversion of 2-phosphoglycerate and 3-phosphoglycerate. This chain is 2,3-bisphosphoglycerate-independent phosphoglycerate mutase, found in Nitratidesulfovibrio vulgaris (strain ATCC 29579 / DSM 644 / CCUG 34227 / NCIMB 8303 / VKM B-1760 / Hildenborough) (Desulfovibrio vulgaris).